Reading from the N-terminus, the 436-residue chain is Mitochondrial substrate carrier family protein Y (436 aa).

Positions 1-102 (MENNNKNINT…NINNNNINKK (102 aa)) are disordered. Over 1 to 137 (MENNNKNINT…GGFLAGLSRN (137 aa)) the chain is Mitochondrial intermembrane. Solcar repeat units follow at residues 135-226 (SRNV…TLKY) and 236-334 (HDTL…LKKQ). Residues 138–158 (VTRIIGSFSSGMAEESAGYPL) form a helical membrane-spanning segment. Residues 159-194 (DLIKTRIQLSQSGVSGGGGTNTSIIKIFKDVIKTEG) are Mitochondrial matrix-facing. Residues 195 to 215 (VIGLFKGLSSPLILSALVTAI) form a helical membrane-spanning segment. The Mitochondrial intermembrane segment spans residues 216 to 238 (QFGLFEDTLKYFRKHQYFKNHDT). Residues 239–259 (LSLLFSGSIAGFAQSFITCPV) traverse the membrane as a helical segment. The Mitochondrial matrix segment spans residues 260–313 (DLVKIQMQIQGIPSSQPNSNNNNNNNKAKGNSYFTKLIYREKGLLGFYQGLSPT). A helical transmembrane segment spans residues 314–334 (LFRDVPGLAIFFTTYETLKKQ). Over 335 to 347 (FGQPELSTQSPTE) the chain is Mitochondrial intermembrane. A helical transmembrane segment spans residues 348–368 (FIKSFIPIVLSGGSAGVFYHG). The Solcar 3 repeat unit spans residues 350-436 (KSFIPIVLSG…FLVYEMVINL (87 aa)). At 369-413 (LTHPFDIAKTLIQSDRSATKYKGTFDCLKQVYQNQGPKSLFKGFS) the chain is on the mitochondrial matrix side. Residues 414–434 (AVAIKSFQSNAVGFLVYEMVI) form a helical membrane-spanning segment. Residues 435–436 (NL) lie on the Mitochondrial intermembrane side of the membrane.

Belongs to the mitochondrial carrier (TC 2.A.29) family.

The protein resides in the mitochondrion inner membrane. Its function is as follows. Mitochondrial solute carriers shuttle metabolites, nucleotides, and cofactors through the mitochondrial inner membrane. The sequence is that of Mitochondrial substrate carrier family protein Y (mcfY) from Dictyostelium discoideum (Social amoeba).